We begin with the raw amino-acid sequence, 160 residues long: Putative NrdI-like protein (160 aa).

This sequence belongs to the NrdI family.

The chain is Putative NrdI-like protein from Streptococcus pyogenes serotype M6 (strain ATCC BAA-946 / MGAS10394).